Consider the following 39-residue polypeptide: MERNPNPNNLPVELNRTSLYLGLLFVFVTGVLMSSYFFN.

Residues serine 18–phenylalanine 38 form a helical membrane-spanning segment.

Belongs to the PsbL family. In terms of assembly, PSII is composed of 1 copy each of membrane proteins PsbA, PsbB, PsbC, PsbD, PsbE, PsbF, PsbH, PsbI, PsbJ, PsbK, PsbL, PsbM, PsbT, PsbX, PsbY, PsbZ, Psb30/Ycf12, peripheral proteins PsbO, CyanoQ (PsbQ), PsbU, PsbV and a large number of cofactors. It forms dimeric complexes.

Its subcellular location is the cellular thylakoid membrane. Its function is as follows. One of the components of the core complex of photosystem II (PSII). PSII is a light-driven water:plastoquinone oxidoreductase that uses light energy to abstract electrons from H(2)O, generating O(2) and a proton gradient subsequently used for ATP formation. It consists of a core antenna complex that captures photons, and an electron transfer chain that converts photonic excitation into a charge separation. This subunit is found at the monomer-monomer interface and is required for correct PSII assembly and/or dimerization. This Synechococcus sp. (strain CC9605) protein is Photosystem II reaction center protein L.